A 429-amino-acid polypeptide reads, in one-letter code: MSVNVNRSVSDQFYRYKMPRLIAKVEGKGNGIKTVIVNMVDVAKALNRPPTYPTKYFGCELGAQTQFDVKNDRYIVNGSHEANKLQDMLDGFIKKFVLCPECENPETDLHVNPKKQTIGNSCKACGYRGMLDTHHKLCTFILKNPPENSDIGTGKKEKEKKNRKGKDKENGSVSTSETPPPPPPNEISPPHAVEEEEDDDWGEDTTEEAQRRRMDEISDHAKGLTLSDDLERTVEERVNILFDFVKKKKEEGIIDSSDKEIVAEAERLDVKAMGPLVLTEVLFDEKIREQIKKYRRHFLRFCHNNKKAQRYLLHGLECVVAMHQAQLISKIPHILKEMYDADLLEEEVIISWSEKASKKYVSKELAKEIRVKAEPFIKWLKEAEEESSGGEEEDEDENIEVVYSKTASVPKVETVKSDNKDDDIDIDAI.

The residue at position 10 (Ser-10) is a Phosphoserine. GTP is bound at residue 27 to 34 (GKGNGIKT). The interval 143–216 (KNPPENSDIG…EEAQRRRMDE (74 aa)) is disordered. The span at 153-170 (TGKKEKEKKNRKGKDKEN) shows a compositional bias: basic and acidic residues. Residues 178 to 187 (TPPPPPPNEI) show a composition bias toward pro residues. The span at 194-207 (EEEEDDDWGEDTTE) shows a compositional bias: acidic residues. Phosphothreonine is present on Thr-225. Phosphoserine is present on residues Ser-227, Ser-387, Ser-388, and Ser-408. Residues 231–390 (ERTVEERVNI…KEAEEESSGG (160 aa)) enclose the W2 domain. Residues Lys-411 and Lys-416 each participate in a glycyl lysine isopeptide (Lys-Gly) (interchain with G-Cter in SUMO2) cross-link. A Phosphoserine modification is found at Ser-417.

It belongs to the eIF-2-beta/eIF-5 family. Component of the 43S pre-initiation complex (43S PIC), which is composed of the 40S ribosomal subunit, EIF1, eIF1A (EIF1AX), eIF3 complex, EIF5 and eIF2-GTP-initiator tRNA complex (eIF2 ternary complex). Interacts with eIF1A (EIF1AX) during scanning. Interacts through its C-terminal domain (CTD) with EIF1 or with eIF2-beta (EIF2S2) (mutually exclusive) through a common binding site. Interacts through its C-terminal domain (CTD) with the CTD of EIF5B. Interacts with FMR1 isoform 6; this interaction occurs in a RNA-dependent manner.

It localises to the cytoplasm. Functionally, component of the 43S pre-initiation complex (43S PIC), which binds to the mRNA cap-proximal region, scans mRNA 5'-untranslated region, and locates the initiation codon. In this complex, acts as a GTPase-activating protein, by promoting GTP hydrolysis by eIF2G (EIF2S3). During scanning, interacts with both EIF1 (via its C-terminal domain (CTD)) and EIF1A (via its NTD). This interaction with EIF1A contributes to the maintenance of EIF1 within the open 43S PIC. When start codon is recognized, EIF5, via its NTD, induces eIF2G (EIF2S3) to hydrolyze the GTP. Start codon recognition also induces a conformational change of the PIC to a closed state. This change increases the affinity of EIF5-CTD for EIF2-beta (EIF2S2), which allows the release, by an indirect mechanism, of EIF1 from the PIC. Finally, EIF5 stabilizes the PIC in its closed conformation. The sequence is that of Eukaryotic translation initiation factor 5 (Eif5) from Mus musculus (Mouse).